The chain runs to 1038 residues: Ribosome quality control complex subunit 2 (1038 aa).

A coiled-coil region spans residues 350-383; sequence ALRIQNQESQAQKKIDDARAENDRKIQALLDVQE. 3 disordered regions span residues 459–499, 708–824, and 877–898; these read LNTS…MKRK, KTSG…DEPG, and QRKK…KREK. The stretch at 713 to 768 forms a coiled coil; that stretch reads EDNGDDDEEEEEEEEEEEEEEEEEEEEEEEEKEEEEKEEEQQQDEDDSNEVNGLEK. Over residues 714–761 the composition is skewed to acidic residues; the sequence is DNGDDDEEEEEEEEEEEEEEEEEEEEEEEEKEEEEKEEEQQQDEDDSN. Over residues 780-794 the composition is skewed to basic and acidic residues; that stretch reads SFEHDNLEKDIEKHC. Residues 795-805 show a composition bias toward polar residues; it reads TISSDTDSDSG. Ser-797 carries the phosphoserine modification. A coiled-coil region spans residues 830–912; sequence IENINSNVRG…QALKFTKKEK (83 aa). Positions 877 to 894 are enriched in basic and acidic residues; that stretch reads QRKKEEIMKREVREDRKN.

It belongs to the NEMF family. As to quaternary structure, component of the ribosome quality control complex (RQC), composed of the E3 ubiquitin ligase RKR1/LTN1, RQC1 and RQC2, as well as CDC48 and its ubiquitin-binding cofactors associated with the 60S ribosomal subunit. RQC2 binds to the 40S-binding surface of tRNAs.

It is found in the cytoplasm. In terms of biological role, key component of the ribosome quality control complex (RQC), a ribosome-associated complex that mediates the extraction of incompletely synthesized nascent chains from stalled ribosomes as well as their ubiquitin-mediated proteasomal degradation. Thereby, frees 60S subunit ribosomes from the stalled translation complex and prevents the accumulation of nascent polypeptide chains that are potentially toxic for the cell. Within the RQC complex, RQC2 specifically binds stalled 60S ribosomal subunits by recognizing an exposed, nascent chain-conjugated tRNA moiety and promotes the recruitment of RKR1/LTN1 to stalled 60S subunits. Following binding to stalled 60S ribosomal subunits, RQC2 mediates CAT tailing by recruiting alanine- and threonine-charged tRNA to the A-site and directing the elongation of stalled nascent chains independently of mRNA or 40S subunits, leading to non-templated C-terminal Ala and Thr extensions (CAT tails). CAT tails promote the RKR1/LTN1-mediated ubiquitination of incompletely synthesized nascent polypeptides: CAT tailing facilitates RKR1/LTN1-dependent ubiquitination by exposing lysine residues that would otherwise remain buried in the ribosomal exit tunnel. Following ubiquitination, incompletely synthesized nascent polypeptides are recognized by CDC48 and degraded by the proteasome. CAT-tailed proteins tend to aggregate and sequester chaperones and can induce proteotoxic stress; their RKR1/LTN1-dependent ubiquitination and degradation is required to prevent proteotoxic stress. This Saccharomyces cerevisiae (strain ATCC 204508 / S288c) (Baker's yeast) protein is Ribosome quality control complex subunit 2.